The following is a 376-amino-acid chain: Nuclear hormone receptor family member nhr-124 (376 aa).

The nuclear receptor DNA-binding region spans 11–89 (PNICAICHQK…LGMRYHNSSE (79 aa)). NR C4-type zinc fingers lie at residues 14 to 34 (CAIC…CNAC) and 50 to 72 (CKKG…CRSC). One can recognise an NR LBD domain in the interval 125–371 (HLHALNETRY…FSKILTEACR (247 aa)).

Belongs to the nuclear hormone receptor family.

Its subcellular location is the nucleus. In terms of biological role, orphan nuclear receptor. The polypeptide is Nuclear hormone receptor family member nhr-124 (nhr-124) (Caenorhabditis elegans).